Reading from the N-terminus, the 98-residue chain is NADH-ubiquinone oxidoreductase chain 4L (98 aa).

The next 3 helical transmembrane spans lie at methionine 1–methionine 21, serine 29–leucine 49, and leucine 61–isoleucine 81.

Belongs to the complex I subunit 4L family. As to quaternary structure, core subunit of respiratory chain NADH dehydrogenase (Complex I) which is composed of 45 different subunits.

It localises to the mitochondrion inner membrane. It catalyses the reaction a ubiquinone + NADH + 5 H(+)(in) = a ubiquinol + NAD(+) + 4 H(+)(out). Functionally, core subunit of the mitochondrial membrane respiratory chain NADH dehydrogenase (Complex I) which catalyzes electron transfer from NADH through the respiratory chain, using ubiquinone as an electron acceptor. Part of the enzyme membrane arm which is embedded in the lipid bilayer and involved in proton translocation. The protein is NADH-ubiquinone oxidoreductase chain 4L (MT-ND4L) of Loxodonta africana (African elephant).